The chain runs to 178 residues: Large ribosomal subunit protein uL5 (178 aa).

The protein belongs to the universal ribosomal protein uL5 family. Part of the 50S ribosomal subunit; part of the 5S rRNA/L5/L18/L25 subcomplex. Contacts the 5S rRNA and the P site tRNA. Forms a bridge to the 30S subunit in the 70S ribosome.

Functionally, this is one of the proteins that bind and probably mediate the attachment of the 5S RNA into the large ribosomal subunit, where it forms part of the central protuberance. In the 70S ribosome it contacts protein S13 of the 30S subunit (bridge B1b), connecting the 2 subunits; this bridge is implicated in subunit movement. Contacts the P site tRNA; the 5S rRNA and some of its associated proteins might help stabilize positioning of ribosome-bound tRNAs. The chain is Large ribosomal subunit protein uL5 from Prochlorococcus marinus subsp. pastoris (strain CCMP1986 / NIES-2087 / MED4).